We begin with the raw amino-acid sequence, 249 residues long: MDGKKCSVWMFLPLVFTLFTSAGLWIVYFIAVEDDKILPLNSAERKPGVKHAPYISIAGDDPPASCVFSQVMNMAAFLALVVAVLRFIQLKPKVLNPWLNISGLVALCLASFGMTLLGNFQLTNDEEIHNVGTSLTFGFGTLTCWIQAALTLKVNIKNEGRRVGIPRVILSASITLCVVLYFILMAQSIHMYAARVQWGLVMCFLSYFGTFAVEFRHYRYEIVCSEYQENFLSFSESLSEASEYQTDQV.

Over methionine 1–tryptophan 9 the chain is Cytoplasmic. The chain crosses the membrane as a helical span at residues methionine 10–isoleucine 30. The Extracellular segment spans residues alanine 31 to alanine 64. The chain crosses the membrane as a helical span at residues serine 65–leucine 85. Topologically, residues arginine 86 to proline 97 are cytoplasmic. The helical transmembrane segment at tryptophan 98–glycine 118 threads the bilayer. At asparagine 119–asparagine 130 the chain is on the extracellular side. Residues valine 131 to threonine 151 traverse the membrane as a helical segment. Residues leucine 152–valine 168 are Cytoplasmic-facing. The helical transmembrane segment at isoleucine 169 to isoleucine 189 threads the bilayer. Residues histidine 190–tyrosine 192 are Extracellular-facing. Residues alanine 193–valine 213 traverse the membrane as a helical segment. The Cytoplasmic portion of the chain corresponds to glutamate 214–valine 249.

It belongs to the DRAM/TMEM150 family.

The protein resides in the cell membrane. Its subcellular location is the lysosome membrane. It catalyses the reaction Ca(2+)(in) = Ca(2+)(out). The enzyme catalyses Na(+)(in) = Na(+)(out). It carries out the reaction K(+)(in) = K(+)(out). The catalysed reaction is Mg(2+)(in) = Mg(2+)(out). Functionally, nonselective cationic channel with high permeability to Ca(2+). Component of a mechanosensitive cation channel, confers mechanically activated (MA) currents with slow inactivation kinetics. May contribute to proprioception. In Homo sapiens (Human), this protein is Transmembrane protein 150C.